Reading from the N-terminus, the 658-residue chain is Endoglucanase 3 (658 aa).

The N-terminal stretch at 1–23 (MQLKNFYPKMSVLGIATVMALTA) is a signal peptide. The N-palmitoyl cysteine moiety is linked to residue Cys-24. Cys-24 is lipidated: S-diacylglycerol cysteine. The propeptide occupies 24–265 (CGDENTQALF…TDSLFIDNIY (242 aa)). Residues 42-83 (ENQVPVSSSDMSPTSSDAVIDPTSSSAAVVDPSTLPAEGPIT) form a disordered region. The segment covering 45-58 (VPVSSSDMSPTSSD) has biased composition (low complexity). The region spanning 87–277 (GLGTLVDDFE…DSSEVEKDQP (191 aa)) is the CBM11 domain. The active-site Proton donor is Glu-448. The active-site Nucleophile is Glu-597.

The protein belongs to the glycosyl hydrolase 5 (cellulase A) family. In terms of assembly, monomer. May be a lipoprotein and may be glycosylated.

It is found in the membrane. It catalyses the reaction Endohydrolysis of (1-&gt;4)-beta-D-glucosidic linkages in cellulose, lichenin and cereal beta-D-glucans.. Its function is as follows. Exhibits both endoglucanase and cellobiosidase activities. This chain is Endoglucanase 3 (cel-3), found in Fibrobacter succinogenes (strain ATCC 19169 / S85).